The following is a 367-amino-acid chain: UDP-N-acetylglucosamine--N-acetylmuramyl-(pentapeptide) pyrophosphoryl-undecaprenol N-acetylglucosamine transferase (367 aa).

Residues 15-17 (TGG), N127, R163, S191, I249, and Q294 each bind UDP-N-acetyl-alpha-D-glucosamine.

The protein belongs to the glycosyltransferase 28 family. MurG subfamily.

It localises to the cell inner membrane. It carries out the reaction di-trans,octa-cis-undecaprenyl diphospho-N-acetyl-alpha-D-muramoyl-L-alanyl-D-glutamyl-meso-2,6-diaminopimeloyl-D-alanyl-D-alanine + UDP-N-acetyl-alpha-D-glucosamine = di-trans,octa-cis-undecaprenyl diphospho-[N-acetyl-alpha-D-glucosaminyl-(1-&gt;4)]-N-acetyl-alpha-D-muramoyl-L-alanyl-D-glutamyl-meso-2,6-diaminopimeloyl-D-alanyl-D-alanine + UDP + H(+). It participates in cell wall biogenesis; peptidoglycan biosynthesis. Its function is as follows. Cell wall formation. Catalyzes the transfer of a GlcNAc subunit on undecaprenyl-pyrophosphoryl-MurNAc-pentapeptide (lipid intermediate I) to form undecaprenyl-pyrophosphoryl-MurNAc-(pentapeptide)GlcNAc (lipid intermediate II). This Burkholderia cenocepacia (strain HI2424) protein is UDP-N-acetylglucosamine--N-acetylmuramyl-(pentapeptide) pyrophosphoryl-undecaprenol N-acetylglucosamine transferase.